The following is a 298-amino-acid chain: Short-chain dehydrogenase/reductase prx6 (298 aa).

NADP(+) is bound by residues I27, D70, N97, Y174, K178, V208, and T210. Y174 (proton acceptor) is an active-site residue. Residue K178 is the Lowers pKa of active site Tyr of the active site.

It belongs to the short-chain dehydrogenases/reductases (SDR) family.

Its pathway is sesquiterpene biosynthesis. Short-chain dehydrogenase/reductase; part of the gene cluster that mediates the biosynthesis of PR-toxin, a bicyclic sesquiterpene belonging to the eremophilane class and acting as a mycotoxin. The first step of the pathway is catalyzed by the aristolochene synthase which performs the cyclization of trans,trans-farnesyl diphosphate (FPP) to the bicyclic sesquiterpene aristolochene. Following the formation of aristolochene, the non-oxygenated aristolochene is converted to the trioxygenated intermediate eremofortin B, via 7-epi-neopetasone. This conversion appears to involve three enzymes, a hydroxysterol oxidase-like enzyme, the quinone-oxidase prx3 that forms the quinone-type-structure in the bicyclic nucleus of aristolochene with the C8-oxo group and the C-3 hydroxyl group, and the P450 monooxygenase prx9 that introduces the epoxide at the double bond between carbons 1 and 2. No monoxy or dioxy-intermediates have been reported to be released to the broth, so these three early oxidative reactions may be coupled together. Eremofortin B is further oxidized by another P450 monooxygenase, that introduces a second epoxide between carbons 7 and 11 prior to acetylation to eremofortin A by the acetyltransferase prx11. The second epoxidation may be performed by a second P450 monooxygenase. After the acetylation step, eremofortin A is converted to eremofortin C and then to PR-toxin. First the conversion of eremofortin A to eremofortin C proceeds by oxidation of the side chain of the molecule at C-12 and is catalyzed by the short-chain oxidoreductase prx1. The cytochrome P450 monooxygenase prx8 also plays a role in this step. The primary alcohol formed at C-12 is finally oxidized by the short-chain alcohol dehydrogenase prx4 that forms PR-toxin. The protein is Short-chain dehydrogenase/reductase prx6 of Penicillium rubens (strain ATCC 28089 / DSM 1075 / NRRL 1951 / Wisconsin 54-1255) (Penicillium chrysogenum).